Here is a 102-residue protein sequence, read N- to C-terminus: Small ribosomal subunit protein uS10 (102 aa).

The tract at residues 34 to 61 (MAGPIPLPTKTLKVTTRKSTDGEGSSSF) is disordered.

This sequence belongs to the universal ribosomal protein uS10 family. As to quaternary structure, part of the 30S ribosomal subunit.

Its function is as follows. Involved in the binding of tRNA to the ribosomes. This is Small ribosomal subunit protein uS10 from Methanococcus aeolicus (strain ATCC BAA-1280 / DSM 17508 / OCM 812 / Nankai-3).